The following is a 347-amino-acid chain: Protein pelota homolog (347 aa).

It belongs to the eukaryotic release factor 1 family. Pelota subfamily. Monomer. Requires a divalent metal cation as cofactor.

The protein resides in the cytoplasm. May function in recognizing stalled ribosomes, interact with stem-loop structures in stalled mRNA molecules, and effect endonucleolytic cleavage of the mRNA. May play a role in the release non-functional ribosomes and degradation of damaged mRNAs. Has endoribonuclease activity. The protein is Protein pelota homolog of Methanococcoides burtonii (strain DSM 6242 / NBRC 107633 / OCM 468 / ACE-M).